Here is a 584-residue protein sequence, read N- to C-terminus: Segmentation polarity homeobox protein engrailed (584 aa).

Disordered regions lie at residues 1–27, 141–198, 343–380, 392–451, and 465–492; these read MALEDRCSPQSAPSPPGCLPHSPPQQH, EESD…SKPS, IGQAQSTTPVTTPSSRPSQLASPPPASNASTISSSSST, CSSA…GGKN, and DRPSSGPRYRRPKQPKDKTNDEKRPRTA. A compositionally biased stretch (pro residues) spans 12–23; it reads APSPPGCLPHSP. The span at 160–174 shows a compositional bias: acidic residues; that stretch reads TEEDEEEDDDIDVDD. The span at 189–198 shows a compositional bias: polar residues; it reads HQQSKQSKPS. 2 stretches are compositionally biased toward low complexity: residues 348 to 380 and 392 to 405; these read STTPVTTPSSRPSQLASPPPASNASTISSSSST and CSSAASSLNSSPSS. Positions 478–489 are enriched in basic and acidic residues; it reads QPKDKTNDEKRP. A DNA-binding region (homeobox) is located at residues 486–545; that stretch reads EKRPRTAFSSEQLARLKREFNENRYLTERRRQQLSSELGLNEAQIKIWFQNKRAKIKKST.

It belongs to the engrailed homeobox family.

It localises to the nucleus. Its function is as follows. This protein specifies the body segmentation pattern. It is required for the development of the central nervous system. Transcriptional regulator that repress activated promoters. The chain is Segmentation polarity homeobox protein engrailed (en) from Drosophila virilis (Fruit fly).